Here is a 119-residue protein sequence, read N- to C-terminus: Large ribosomal subunit protein uL14 (119 aa).

The protein belongs to the universal ribosomal protein uL14 family. Part of the 50S ribosomal subunit. Forms a cluster with proteins L3 and L19. In the 70S ribosome, L14 and L19 interact and together make contacts with the 16S rRNA in bridges B5 and B8.

In terms of biological role, binds to 23S rRNA. Forms part of two intersubunit bridges in the 70S ribosome. This chain is Large ribosomal subunit protein uL14, found in Wolbachia pipientis subsp. Culex pipiens (strain wPip).